A 911-amino-acid polypeptide reads, in one-letter code: MPRPRAAKEEETELLAQHQESPRPSSDGSEASASSISTTSLVLEHINDGGFNGARSKVSEKYTDDGNGDLGHARERFDIEDGKFHPLTPVDKKARRTLWIVGTICAVGWALALVSFLMNGNYKHSSTRPHDPDASVTKGSGKKITLDNVLGGQFYPQSQSVSWIAGPKGEDGLLLEKGVSGKDYLVVEDIRSKGNTEAAGDKFTLMKKGNFQIGEDIFIYPSNVWPSADFKKVLVMSEQQKNWRHSYTGLYWIFDVETQTGEPLDPENQSARVQYASFSPQSDAVVFTRDNNLYLRKLDSQKVVKITHDGGSELFYGVPDWVYEEEVFQDNSATWWSEDGKYVAFLRTDESMVPTYPVQYFVSRPSGKQPDAGKESYPEVREIKYPKAGAPNPIVTLQFYDIEKSEMFRVDIDNDFTDKDRLITEIVWAGKSGQVLVRETNRESDILKLILIDVSKRTGKTIREENVAKLDGGWFEVSHKTTFIPADSSLGRANDGYIDSVIHEGYDHIGYFTPLDSDKPILLTKGEWEVVEAPSRVDLKNNLVYYVSTERGSMERHPYVVALNGTDKREVMDHSGPAYYDSSFSTGGGYALMSYQGPGIPWQKIVSTPSNTEKFEKVLEENKALEKMVQKHELPILKYQTIDVDGFKLNVLERRPPHFSEKRKYPVLFYQYSGPGSQQVQRKFEVDFQSYIAANLGYIVVTVDGRGTGFLGRKLRCITRDNIGYYEAYDQIAAAKMWAAKKYVDAEKLAIWGWSYGGFTTLKTIEMDGGRTFKYGMAVAPVTDWRFYDSIYTERYMHTPQNNPTGYDNTSITDVHSLSQNVRFLIMHGVADDNVHMQNTLTLLDKLDVAGVENYDVHVFPDSDHSIYFHNAHKIVYDKLTWWLTNAFNGEWLKIQKVRPKAQADARSLGR.

The segment at 1 to 39 (MPRPRAAKEEETELLAQHQESPRPSSDGSEASASSISTT) is disordered. Residues 1–97 (MPRPRAAKEE…TPVDKKARRT (97 aa)) are Cytoplasmic-facing. Residues 25 to 39 (SSDGSEASASSISTT) are compositionally biased toward low complexity. The chain crosses the membrane as a helical; Signal-anchor for type II membrane protein span at residues 98–118 (LWIVGTICAVGWALALVSFLM). Residues 119-911 (NGNYKHSSTR…AQADARSLGR (793 aa)) are Vacuolar-facing. N-linked (GlcNAc...) asparagine glycosylation is found at asparagine 268 and asparagine 564. Serine 755 acts as the Charge relay system in catalysis. A glycan (N-linked (GlcNAc...) asparagine) is linked at asparagine 809. Active-site charge relay system residues include aspartate 832 and histidine 865.

The protein belongs to the peptidase S9B family.

It is found in the vacuole membrane. The enzyme catalyses Release of an N-terminal dipeptide, Xaa-Yaa-|-Zaa-, from a polypeptide, preferentially when Yaa is Pro, provided Zaa is neither Pro nor hydroxyproline.. Type IV dipeptidyl-peptidase which removes N-terminal dipeptides sequentially from polypeptides having unsubstituted N-termini provided that the penultimate residue is proline. This is Probable dipeptidyl-aminopeptidase B (DAPB) from Phaeosphaeria nodorum (strain SN15 / ATCC MYA-4574 / FGSC 10173) (Glume blotch fungus).